Here is a 341-residue protein sequence, read N- to C-terminus: GTPase Obg (341 aa).

The 159-residue stretch at M1 to I159 folds into the Obg domain. Residues A160–E327 enclose the OBG-type G domain. GTP is bound by residues G166–S173, F191–Y195, D212–G215, S279–D282, and S308–V310. S173 and T193 together coordinate Mg(2+).

This sequence belongs to the TRAFAC class OBG-HflX-like GTPase superfamily. OBG GTPase family. Monomer. Mg(2+) is required as a cofactor.

It is found in the cytoplasm. An essential GTPase which binds GTP, GDP and possibly (p)ppGpp with moderate affinity, with high nucleotide exchange rates and a fairly low GTP hydrolysis rate. Plays a role in control of the cell cycle, stress response, ribosome biogenesis and in those bacteria that undergo differentiation, in morphogenesis control. In Bartonella quintana (strain Toulouse) (Rochalimaea quintana), this protein is GTPase Obg.